Here is a 677-residue protein sequence, read N- to C-terminus: WD repeat-containing protein 48 (677 aa).

Residue Tyr28 is modified to Phosphotyrosine. WD repeat units lie at residues 28–67, 73–112, 115–154, 166–205, 208–247, 250–289, 292–334, and 358–397; these read YNRN…QDPY, HHTD…CMST, THKD…ALTA, GNKD…KLMK, GHTD…CIAT, VHDE…IRVL, EEKA…NFRA, and KGGA…KVED. Lys214 bears the N6-acetyllysine mark. Residue Lys578 is modified to N6-acetyllysine. The interval 607-628 is disordered; that stretch reads LDNESQTTSSSNNEKPGEQEKE. Positions 609-620 are enriched in low complexity; that stretch reads NESQTTSSSNNE. Thr613 carries the post-translational modification Phosphothreonine.

The protein belongs to the WD repeat WDR48 family. In terms of assembly, interacts with USP46. Interacts with USP1. Interacts with USP12. Component of the USP12-WDR20-WDR48 deubiquitinating complex. Component of the USP12-DMWD-WDR48 deubiquitinating complex. Interacts with PHLPP1. Interacts with RAD51AP1; the interaction is direct and promotes formation of a trimeric complex with RAD51 via RAD51AP1. Interacts with ATAD5; the interaction regulates USP1-mediated PCNA deubiquitination. Interacts with RAD51; the interaction is enhanced under replication stress. Interacts with ITCH; the interaction is more efficient when both USP12 and WDR48/UAF1 are involved and may facilitate recruitment of the USP12 deubiquitinating complex to Notch. As to quaternary structure, (Microbial infection) Interacts with papillomavirus HPV11 E1 protein. (Microbial infection) Interacts with Saimiriine herpesvirus TIP protein. In terms of assembly, (Microbial infection) Interacts with human cytomegalovirus protein UL138. As to quaternary structure, (Microbial infection) Interacts with Epstein-Barr virus protein EBNA3. In terms of tissue distribution, ubiquitous.

It is found in the nucleus. Its subcellular location is the cytoplasm. It localises to the lysosome. The protein localises to the late endosome. Its function is as follows. Regulator of deubiquitinating complexes, which acts as a strong activator of USP1, USP12 and USP46. Enhances the USP1-mediated deubiquitination of FANCD2; USP1 being almost inactive by itself. Activates deubiquitination by increasing the catalytic turnover without increasing the affinity of deubiquitinating enzymes for the substrate. Also activates deubiquitinating activity of complexes containing USP12. In complex with USP12, acts as a potential tumor suppressor by positively regulating PHLPP1 stability. Docks at the distal end of the USP12 fingers domain and induces a cascade of structural changes leading to the activation of the enzyme. Together with RAD51AP1, promotes DNA repair by stimulating RAD51-mediated homologous recombination. Binds single-stranded DNA (ssDNA) and double-stranded DNA (dsDNA). DNA-binding is required both for USP1-mediated deubiquitination of FANCD2 and stimulation of RAD51-mediated homologous recombination: both WDR48/UAF1 and RAD51AP1 have coordinated role in DNA-binding during these processes. Together with ATAD5 and by regulating USP1 activity, has a role in PCNA-mediated translesion synthesis (TLS) by deubiquitinating monoubiquitinated PCNA. Together with ATAD5, has a role in recruiting RAD51 to stalled forks during replication stress. Functionally, (Microbial infection) In case of infection by Herpesvirus saimiri, may play a role in vesicular transport or membrane fusion events necessary for transport to lysosomes. Induces lysosomal vesicle formation via interaction with Herpesvirus saimiri tyrosine kinase-interacting protein (TIP). Subsequently, TIP recruits tyrosine-protein kinase LCK, resulting in down-regulation of T-cell antigen receptor TCR. May play a role in generation of enlarged endosomal vesicles via interaction with TIP. In case of infection by papillomavirus HPV11, promotes the maintenance of the viral genome via its interaction with HPV11 helicase E1. This chain is WD repeat-containing protein 48, found in Homo sapiens (Human).